Consider the following 122-residue polypeptide: Large ribosomal subunit protein bL19 (122 aa).

This sequence belongs to the bacterial ribosomal protein bL19 family.

In terms of biological role, this protein is located at the 30S-50S ribosomal subunit interface and may play a role in the structure and function of the aminoacyl-tRNA binding site. This chain is Large ribosomal subunit protein bL19 (rplS), found in Synechocystis sp. (strain ATCC 27184 / PCC 6803 / Kazusa).